Consider the following 442-residue polypeptide: tRNA modification GTPase MnmE (442 aa).

Positions 27, 84, and 124 each coordinate (6S)-5-formyl-5,6,7,8-tetrahydrofolate. The TrmE-type G domain occupies Gly-221–Glu-366. Residues Asn-231–Ser-236, Ser-250–Thr-256, and Asp-275–Gly-278 each bind GTP. Residues Ser-235 and Thr-256 each contribute to the Mg(2+) site. Lys-442 lines the (6S)-5-formyl-5,6,7,8-tetrahydrofolate pocket.

The protein belongs to the TRAFAC class TrmE-Era-EngA-EngB-Septin-like GTPase superfamily. TrmE GTPase family. Homodimer. Heterotetramer of two MnmE and two MnmG subunits. It depends on K(+) as a cofactor.

It localises to the cytoplasm. Its function is as follows. Exhibits a very high intrinsic GTPase hydrolysis rate. Involved in the addition of a carboxymethylaminomethyl (cmnm) group at the wobble position (U34) of certain tRNAs, forming tRNA-cmnm(5)s(2)U34. The polypeptide is tRNA modification GTPase MnmE (Brucella melitensis biotype 1 (strain ATCC 23456 / CCUG 17765 / NCTC 10094 / 16M)).